The chain runs to 153 residues: MAKITGNLVATGLKFGIVTARFNDFINDKLLSGAIDTLVRHGAYENDIDTAWVPGAFEIPLVAKKMANSGKYDAVICLGTVIRGSTTHYDYVCNEAAKGIGAVALETGVPVIFGVLTTENIEQAIERAGTKAGNKGSECALGAIEIVNVLKAI.

5-amino-6-(D-ribitylamino)uracil-binding positions include phenylalanine 22, 56–58 (AFE), and 80–82 (TVI). Residue 85–86 (ST) coordinates (2S)-2-hydroxy-3-oxobutyl phosphate. Histidine 88 acts as the Proton donor in catalysis. Residue phenylalanine 113 coordinates 5-amino-6-(D-ribitylamino)uracil. Arginine 127 lines the (2S)-2-hydroxy-3-oxobutyl phosphate pocket.

It belongs to the DMRL synthase family. In terms of assembly, forms an icosahedral capsid composed of 60 subunits, arranged as a dodecamer of pentamers.

The enzyme catalyses (2S)-2-hydroxy-3-oxobutyl phosphate + 5-amino-6-(D-ribitylamino)uracil = 6,7-dimethyl-8-(1-D-ribityl)lumazine + phosphate + 2 H2O + H(+). Its pathway is cofactor biosynthesis; riboflavin biosynthesis; riboflavin from 2-hydroxy-3-oxobutyl phosphate and 5-amino-6-(D-ribitylamino)uracil: step 1/2. In terms of biological role, catalyzes the formation of 6,7-dimethyl-8-ribityllumazine by condensation of 5-amino-6-(D-ribitylamino)uracil with 3,4-dihydroxy-2-butanone 4-phosphate. This is the penultimate step in the biosynthesis of riboflavin. The polypeptide is 6,7-dimethyl-8-ribityllumazine synthase (Actinobacillus pleuropneumoniae (Haemophilus pleuropneumoniae)).